The following is a 72-amino-acid chain: MAKEDCIEMEGVVLEALPNTMFRVELENGHIVTAHISGKMRKNYIRILTGDKVVVEITPYDLTKGRIKFRSK.

Residues 1–72 (MAKEDCIEME…TKGRIKFRSK (72 aa)) form the S1-like domain.

Belongs to the IF-1 family. In terms of assembly, component of the 30S ribosomal translation pre-initiation complex which assembles on the 30S ribosome in the order IF-2 and IF-3, IF-1 and N-formylmethionyl-tRNA(fMet); mRNA recruitment can occur at any time during PIC assembly.

The protein resides in the cytoplasm. Functionally, one of the essential components for the initiation of protein synthesis. Stabilizes the binding of IF-2 and IF-3 on the 30S subunit to which N-formylmethionyl-tRNA(fMet) subsequently binds. Helps modulate mRNA selection, yielding the 30S pre-initiation complex (PIC). Upon addition of the 50S ribosomal subunit IF-1, IF-2 and IF-3 are released leaving the mature 70S translation initiation complex. In Francisella tularensis subsp. novicida (strain U112), this protein is Translation initiation factor IF-1.